The primary structure comprises 218 residues: MLNSPLTSVLFVLLFVLSPIYGAFEYMQLVLQWPTAFCHTTPCKRIPNNFTIHGLWPDNVSTTLNYCAAKENFKNIEDDTKKDDLYKRWPDLTTAETYCKQHQNFWRHEYNKHGKCCSESYNREQYFDLAMALKDKFDLLSSLRNHGIIPGRGMKYTVQKINSTIKKITQGYPNLSCTKGIMELVEIGICFDSMVKNVINCPHPKTCKPTGSNEIKFP.

The signal sequence occupies residues 1 to 22 (MLNSPLTSVLFVLLFVLSPIYG). Residue Q32 participates in RNA binding. C38 and C43 are oxidised to a cystine. N49 carries an N-linked (GlcNAc...) asparagine glycan. H53 contributes to the RNA binding site. H53 serves as the catalytic Proton donor. N-linked (GlcNAc...) asparagine glycosylation is present at N59. C67 and C116 are joined by a disulfide. RNA is bound by residues 91–92 (DL), F105, 108–109 (HE), and 112–113 (KH). E109 is a catalytic residue. H113 functions as the Proton acceptor in the catalytic mechanism. N162 is a glycosylation site (N-linked (GlcNAc...) asparagine). 2 cysteine pairs are disulfide-bonded: C177/C207 and C190/C201.

This sequence belongs to the RNase T2 family.

It is found in the secreted. The protein localises to the extracellular space. It carries out the reaction a ribonucleotidyl-ribonucleotide-RNA + H2O = a 3'-end 3'-phospho-ribonucleotide-RNA + a 5'-end dephospho-ribonucleoside-RNA + H(+). Its function is as follows. Self-incompatibility (SI) is the inherited ability of a flowering plant to prevent self-fertilization by discriminating between self and non-self pollen during pollination. In many species of the Solanaceae, self-incompatibility is controlled by the single, multiallelic locus S. This stylar glycoprotein is associated with expression of self-incompatibility in potato. This Nicotiana alata (Winged tobacco) protein is Ribonuclease S-7.